We begin with the raw amino-acid sequence, 1432 residues long: Superkiller protein 3 (1432 aa).

TPR repeat units lie at residues 4–37 and 47–80; these read IKQL…DPDN and ALSS…VPDN. The disordered stretch occupies residues 339–397; it reads SANKPPEGHKKTEKETDIKDVDETNEDEVKDRVEDEVKDRVEDEVKDQDEEAKEDEEED. Positions 344–381 are enriched in basic and acidic residues; sequence PEGHKKTEKETDIKDVDETNEDEVKDRVEDEVKDRVED. Over residues 382-397 the composition is skewed to acidic residues; it reads EVKDQDEEAKEDEEED. 9 TPR repeats span residues 425 to 458, 471 to 507, 508 to 541, 627 to 661, 702 to 735, 736 to 769, 945 to 985, 987 to 1018, and 1226 to 1259; these read ILAH…IAYN, REFS…DFSN, IQAK…SPNN, APGF…DAGD, NWPF…DPND, VESW…RPSH, ASYW…QSNT, ETWI…EPKA, and ISNH…SKDS.

Belongs to the SKI3 family. As to quaternary structure, component of the SKI complex composed of at least SKI2, SKI3 and SKI8. The SKI complex interacts with SKI7, which makes the link between the SKI complex and the exosome in order to perform mRNA degradation.

The protein localises to the cytoplasm. It is found in the nucleus. In terms of biological role, component of the SKI complex involved in 3'-mRNA degradation pathway. Represses dsRNA virus propagation by specifically blocking translation of viral mRNAs, perhaps recognizing the absence of CAP or poly(A). Essential for cell growth only in the presence of M1 replicon. The polypeptide is Superkiller protein 3 (SKI3) (Saccharomyces cerevisiae (strain ATCC 204508 / S288c) (Baker's yeast)).